Here is a 545-residue protein sequence, read N- to C-terminus: Probable target of rapamycin complex 2 subunit BIT2 (545 aa).

Disordered regions lie at residues Met1–Lys24 and Asp78–Ser166. 3 stretches are compositionally biased toward polar residues: residues Ala11–Lys24, Ile106–Arg130, and Arg151–Ser166.

In terms of assembly, interacts with the target of rapamycin complex 2 (TORC2) subunit TSC11 and the TORC2 effectors SLM1 and SLM2.

The polypeptide is Probable target of rapamycin complex 2 subunit BIT2 (BIT2) (Saccharomyces cerevisiae (strain ATCC 204508 / S288c) (Baker's yeast)).